Consider the following 192-residue polypeptide: MINISKKAQEHFTSLLSNEPENTQIRVFIVNPGTPNAECGVAFCPENEIELSDIQLKYDGFFVYVNKDTISYLKNSVIDLVTDKIGSQLTLKAPYAKNNFSKKVSSSLEEKVKCFLNLEINPQLSMHGGRVELIKIDKNGIAAIQFSGGCNGCSMIGSTLKETVEKKLLSSFSEIKKVYDETHHLHGQHSFY.

[4Fe-4S] cluster-binding residues include Cys150 and Cys153.

This sequence belongs to the NfuA family. In terms of assembly, homodimer. It depends on [4Fe-4S] cluster as a cofactor.

Involved in iron-sulfur cluster biogenesis. Binds a 4Fe-4S cluster, can transfer this cluster to apoproteins, and thereby intervenes in the maturation of Fe/S proteins. Could also act as a scaffold/chaperone for damaged Fe/S proteins. The protein is Fe/S biogenesis protein NfuA of Buchnera aphidicola subsp. Acyrthosiphon pisum (strain APS) (Acyrthosiphon pisum symbiotic bacterium).